A 263-amino-acid chain; its full sequence is Inactive adenylate kinase (263 aa).

Belongs to the adenylate kinase family.

The protein resides in the cytoplasm. Lacks adenylate kinase activity. The chain is Inactive adenylate kinase from Plasmodium falciparum (isolate 3D7).